The following is a 318-amino-acid chain: Methionyl-tRNA formyltransferase (318 aa).

Ser112–Pro115 is a (6S)-5,6,7,8-tetrahydrofolate binding site.

This sequence belongs to the Fmt family.

It catalyses the reaction L-methionyl-tRNA(fMet) + (6R)-10-formyltetrahydrofolate = N-formyl-L-methionyl-tRNA(fMet) + (6S)-5,6,7,8-tetrahydrofolate + H(+). In terms of biological role, attaches a formyl group to the free amino group of methionyl-tRNA(fMet). The formyl group appears to play a dual role in the initiator identity of N-formylmethionyl-tRNA by promoting its recognition by IF2 and preventing the misappropriation of this tRNA by the elongation apparatus. This chain is Methionyl-tRNA formyltransferase, found in Shewanella baltica (strain OS223).